A 700-amino-acid chain; its full sequence is Polyphosphate kinase (700 aa).

N45 is a binding site for ATP. Positions 373 and 403 each coordinate Mg(2+). One can recognise a PLD phosphodiesterase 1 domain in the interval 428 to 462 (PGMKIHAKLLLITRREEQGFVRYAHIGTGNFHERT). H433 (phosphohistidine intermediate) is an active-site residue. ATP contacts are provided by Y466, R562, and H590. A PLD phosphodiesterase 2 domain is found at 585–615 (DRFLEHPRVLVVHNDGDPQVFISSADWMERN).

This sequence belongs to the polyphosphate kinase 1 (PPK1) family. It depends on Mg(2+) as a cofactor. An intermediate of this reaction is the autophosphorylated ppk in which a phosphate is covalently linked to a histidine residue through a N-P bond.

The enzyme catalyses [phosphate](n) + ATP = [phosphate](n+1) + ADP. Catalyzes the reversible transfer of the terminal phosphate of ATP to form a long-chain polyphosphate (polyP). This chain is Polyphosphate kinase, found in Vibrio vulnificus (strain CMCP6).